Reading from the N-terminus, the 229-residue chain is Wtf element wtf14 (229 aa).

The segment covering 1–26 (MENNHHLAKDSLDELNPKRGKGEHET) has biased composition (basic and acidic residues). Residues 1–27 (MENNHHLAKDSLDELNPKRGKGEHETQ) are disordered. A run of 4 helical transmembrane segments spans residues 71–91 (IPAV…YLVF), 100–120 (VLFG…LLAT), 151–171 (LYAI…LMFF), and 188–208 (VIGV…PGLF).

The protein belongs to the WTF family.

Its subcellular location is the endoplasmic reticulum membrane. Functionally, may act in meiotic drive. The sequence is that of Wtf element wtf14 from Schizosaccharomyces pombe (strain 972 / ATCC 24843) (Fission yeast).